Here is a 580-residue protein sequence, read N- to C-terminus: Arginine--tRNA ligase (580 aa).

The short motif at 123–133 (PNIAKEMHVGH) is the 'HIGH' region element.

It belongs to the class-I aminoacyl-tRNA synthetase family. As to quaternary structure, monomer.

The protein localises to the cytoplasm. The catalysed reaction is tRNA(Arg) + L-arginine + ATP = L-arginyl-tRNA(Arg) + AMP + diphosphate. This chain is Arginine--tRNA ligase (argS), found in Buchnera aphidicola subsp. Schizaphis graminum (strain Sg).